A 66-amino-acid chain; its full sequence is DNA gyrase inhibitor YacG (66 aa).

The Zn(2+) site is built by cysteine 9, cysteine 12, cysteine 28, and cysteine 32. Positions 45–66 are disordered; the sequence is HKIAGAEESEDELYSGDLEPRH.

The protein belongs to the DNA gyrase inhibitor YacG family. In terms of assembly, interacts with GyrB. Zn(2+) is required as a cofactor.

Inhibits all the catalytic activities of DNA gyrase by preventing its interaction with DNA. Acts by binding directly to the C-terminal domain of GyrB, which probably disrupts DNA binding by the gyrase. The protein is DNA gyrase inhibitor YacG of Pseudomonas entomophila (strain L48).